We begin with the raw amino-acid sequence, 182 residues long: Adenylate kinase (182 aa).

Position 12–17 (12–17 (GAGKGT)) interacts with ATP. Residues 32–61 (STGDLLRTEVGAKTPLGQEAAAVMNRGELV) are NMP. Residues threonine 33, arginine 38, 59 to 61 (ELV), 85 to 88 (GFPR), and glutamine 92 each bind AMP. An LID region spans residues 126-132 (SRGRSDD). An ATP-binding site is contributed by arginine 127. AMP is bound by residues arginine 129 and arginine 140. Glycine 168 lines the ATP pocket.

It belongs to the adenylate kinase family. In terms of assembly, monomer.

It is found in the cytoplasm. It carries out the reaction AMP + ATP = 2 ADP. It participates in purine metabolism; AMP biosynthesis via salvage pathway; AMP from ADP: step 1/1. In terms of biological role, catalyzes the reversible transfer of the terminal phosphate group between ATP and AMP. Plays an important role in cellular energy homeostasis and in adenine nucleotide metabolism. This is Adenylate kinase from Prochlorococcus marinus (strain MIT 9313).